A 311-amino-acid polypeptide reads, in one-letter code: MSQNQEISKKEQYNLNKLQKRLRRNVGEAIADFNMIEEGDRIMVCLSGGKDSYTMLEILRNLQQSAPINFSLVAVNLDQKQPGFPEHVLPEYLEKLGVEYKIVEENTYGIVKEKIPEGKTTCSLCSRLRRGILYRTATELGATKIALGHHRDDILQTLFLNMFYGGKMKGMPPKLMSDDGKHIVIRPLAYCREKDIQRFADAKAFPIIPCNLCGSQPNLQRQVIADMLRDWDKRYPGRIETMFSAMQNVVPSHLCDTNLFDFKGITHGSEVVNGGDLAFDREEIPLQPAGWQPEEDENQLDELRLNVVEVK.

A PP-loop motif motif is present at residues 47-52; sequence SGGKDS. [4Fe-4S] cluster contacts are provided by Cys122, Cys125, and Cys213.

The protein belongs to the TtcA family. As to quaternary structure, homodimer. The cofactor is Mg(2+). [4Fe-4S] cluster is required as a cofactor.

It localises to the cytoplasm. It catalyses the reaction cytidine(32) in tRNA + S-sulfanyl-L-cysteinyl-[cysteine desulfurase] + AH2 + ATP = 2-thiocytidine(32) in tRNA + L-cysteinyl-[cysteine desulfurase] + A + AMP + diphosphate + H(+). The protein operates within tRNA modification. Catalyzes the ATP-dependent 2-thiolation of cytidine in position 32 of tRNA, to form 2-thiocytidine (s(2)C32). The sulfur atoms are provided by the cysteine/cysteine desulfurase (IscS) system. The protein is tRNA-cytidine(32) 2-sulfurtransferase of Escherichia coli O139:H28 (strain E24377A / ETEC).